Consider the following 152-residue polypeptide: Ribosome maturation factor RimP (152 aa).

Belongs to the RimP family.

The protein localises to the cytoplasm. Its function is as follows. Required for maturation of 30S ribosomal subunits. The protein is Ribosome maturation factor RimP of Serratia proteamaculans (strain 568).